Consider the following 126-residue polypeptide: Large ribosomal subunit protein bL12 (126 aa).

This sequence belongs to the bacterial ribosomal protein bL12 family. In terms of assembly, homodimer. Part of the ribosomal stalk of the 50S ribosomal subunit. Forms a multimeric L10(L12)X complex, where L10 forms an elongated spine to which 2 to 4 L12 dimers bind in a sequential fashion. Binds GTP-bound translation factors.

Functionally, forms part of the ribosomal stalk which helps the ribosome interact with GTP-bound translation factors. Is thus essential for accurate translation. The polypeptide is Large ribosomal subunit protein bL12 (Corynebacterium diphtheriae (strain ATCC 700971 / NCTC 13129 / Biotype gravis)).